Reading from the N-terminus, the 944-residue chain is Valine--tRNA ligase (944 aa).

Positions 43-53 (PNVTGTLHMGH) match the 'HIGH' region motif. Positions 550–554 (KMSKS) match the 'KMSKS' region motif. Residue K553 coordinates ATP. The stretch at 878 to 944 (LVDMDAERTR…TGLREQRAKL (67 aa)) forms a coiled coil.

Belongs to the class-I aminoacyl-tRNA synthetase family. ValS type 1 subfamily. In terms of assembly, monomer.

The protein localises to the cytoplasm. The catalysed reaction is tRNA(Val) + L-valine + ATP = L-valyl-tRNA(Val) + AMP + diphosphate. Functionally, catalyzes the attachment of valine to tRNA(Val). As ValRS can inadvertently accommodate and process structurally similar amino acids such as threonine, to avoid such errors, it has a 'posttransfer' editing activity that hydrolyzes mischarged Thr-tRNA(Val) in a tRNA-dependent manner. This is Valine--tRNA ligase from Xanthomonas campestris pv. campestris (strain B100).